Consider the following 457-residue polypeptide: Paired box protein Pax-8 (457 aa).

The segment at residues 9-135 is a DNA-binding region (paired); sequence GHGGLNQLGG…SSINRIIRTK (127 aa). The interval 12-68 is PAI subdomain; that stretch reads GLNQLGGAFVNGRPLPEVVRQRIVDLAHQGVRPCDISRQLRVSHGCVSKILGRYYET. The RED subdomain stretch occupies residues 87-135; the sequence is KVVEKIGDYKRQNPTMFAWEIRDRLLAEGVCDNDTVPSVSSINRIIRTK. Positions 159-182 are enriched in polar residues; that stretch reads LIPSSAVTPPESPQSDSLGSTYSI. Positions 159-224 are disordered; sequence LIPSSAVTPP…SSSSGPRKHL (66 aa). Ser-304 carries the phosphoserine modification.

Interacts with WWTR1. Expressed in the developing excretory system and the thyroid gland.

The protein localises to the nucleus. Functionally, thought to encode a transcription factor. It may have a role in kidney cell differentiation. May play a regulatory role in mammalian development. This chain is Paired box protein Pax-8 (Pax8), found in Mus musculus (Mouse).